A 143-amino-acid polypeptide reads, in one-letter code: MSTEFPTKNGINREWHVIDAENVVLGKLASRAAMILMGKHKPTYTPFIDAGDHVVVINAEKVKVTGRKEEDKLYRHFTGYPGGLVEKSLKRVRAEKPTRIVEDAIAGMLPKNKLGKQMYRKLNVYAGSKHPHAAQQPVALTVK.

The protein belongs to the universal ribosomal protein uL13 family. In terms of assembly, part of the 50S ribosomal subunit.

This protein is one of the early assembly proteins of the 50S ribosomal subunit, although it is not seen to bind rRNA by itself. It is important during the early stages of 50S assembly. This is Large ribosomal subunit protein uL13 from Solibacter usitatus (strain Ellin6076).